The sequence spans 218 residues: 3,4-dihydroxy-2-butanone 4-phosphate synthase (218 aa).

D-ribulose 5-phosphate is bound by residues 38–39 (RE), D43, 151–155 (RRGHT), and E175. Residue E39 coordinates Mg(2+). Residues 125–151 (PHAKPEDLARPGHVFPLRARPGGVMTR) form a disordered region. Mg(2+) is bound at residue H154.

The protein belongs to the DHBP synthase family. Homodimer. It depends on Mg(2+) as a cofactor. Mn(2+) serves as cofactor.

The catalysed reaction is D-ribulose 5-phosphate = (2S)-2-hydroxy-3-oxobutyl phosphate + formate + H(+). It functions in the pathway cofactor biosynthesis; riboflavin biosynthesis; 2-hydroxy-3-oxobutyl phosphate from D-ribulose 5-phosphate: step 1/1. Its function is as follows. Catalyzes the conversion of D-ribulose 5-phosphate to formate and 3,4-dihydroxy-2-butanone 4-phosphate. The protein is 3,4-dihydroxy-2-butanone 4-phosphate synthase of Vibrio parahaemolyticus serotype O3:K6 (strain RIMD 2210633).